A 480-amino-acid polypeptide reads, in one-letter code: Glycogen synthase (480 aa).

Lys15 is an ADP-alpha-D-glucose binding site.

This sequence belongs to the glycosyltransferase 1 family. Bacterial/plant glycogen synthase subfamily.

The enzyme catalyses [(1-&gt;4)-alpha-D-glucosyl](n) + ADP-alpha-D-glucose = [(1-&gt;4)-alpha-D-glucosyl](n+1) + ADP + H(+). It participates in glycan biosynthesis; glycogen biosynthesis. Its function is as follows. Synthesizes alpha-1,4-glucan chains using ADP-glucose. The polypeptide is Glycogen synthase (Granulibacter bethesdensis (strain ATCC BAA-1260 / CGDNIH1)).